A 94-amino-acid polypeptide reads, in one-letter code: Large ribosomal subunit protein uL23 (94 aa).

It belongs to the universal ribosomal protein uL23 family. As to quaternary structure, part of the 50S ribosomal subunit. Contacts protein L29, and trigger factor when it is bound to the ribosome.

One of the early assembly proteins it binds 23S rRNA. One of the proteins that surrounds the polypeptide exit tunnel on the outside of the ribosome. Forms the main docking site for trigger factor binding to the ribosome. The polypeptide is Large ribosomal subunit protein uL23 (Latilactobacillus sakei subsp. sakei (strain 23K) (Lactobacillus sakei subsp. sakei)).